The primary structure comprises 226 residues: MTQDELKQAVAQAALDYILPHLEDDMILGIGTGSTARLFIDLLAAHKGKFDGAVSSSEASSEQLKGHGIPVYDLNSVDSLPFYIDGADEANAQLHLIKGGGAALTREKIITAVADKFICIADASKDVDVLGKFPLPVEVIPMARAHVAREIVKLGGNPVHRQDCVTDNGCQILDVYDLAIHDAPALEAKLNNIAGVVTNGLFALRPADVLLLGTTNGVETRFAAKP.

Residues 32-35 (TGST), 85-88 (DGAD), and 98-101 (KGGG) contribute to the substrate site. Glu107 serves as the catalytic Proton acceptor. Lys125 lines the substrate pocket.

This sequence belongs to the ribose 5-phosphate isomerase family. As to quaternary structure, homodimer.

The catalysed reaction is aldehydo-D-ribose 5-phosphate = D-ribulose 5-phosphate. It functions in the pathway carbohydrate degradation; pentose phosphate pathway; D-ribose 5-phosphate from D-ribulose 5-phosphate (non-oxidative stage): step 1/1. Catalyzes the reversible conversion of ribose-5-phosphate to ribulose 5-phosphate. This Saccharophagus degradans (strain 2-40 / ATCC 43961 / DSM 17024) protein is Ribose-5-phosphate isomerase A.